Consider the following 378-residue polypeptide: Mitogen-activated protein kinase mpkC (378 aa).

In terms of domain architecture, Protein kinase spans Tyr20–Leu300. Residues Ile26–Val34 and Lys49 contribute to the ATP site. Asp141 (proton acceptor) is an active-site residue. At Thr171 the chain carries Phosphothreonine. Positions Thr171–Tyr173 match the TXY motif. Tyr173 bears the Phosphotyrosine mark.

Belongs to the protein kinase superfamily. Ser/Thr protein kinase family. MAP kinase subfamily. HOG1 sub-subfamily. As to quaternary structure, interacts with sakA upon osmotic and cell wall stresses. Mg(2+) serves as cofactor. In terms of processing, dually phosphorylated on Thr-171 and Tyr-173, which activates the enzyme.

The protein resides in the cytoplasm. Its subcellular location is the nucleus. The enzyme catalyses L-seryl-[protein] + ATP = O-phospho-L-seryl-[protein] + ADP + H(+). The catalysed reaction is L-threonyl-[protein] + ATP = O-phospho-L-threonyl-[protein] + ADP + H(+). With respect to regulation, activated by tyrosine and threonine phosphorylation. Its function is as follows. Mitogen-activated protein kinase; part of an osmotic and general signal pathways involved in regulation of the response to the cell wall damage, oxidative stress, drug resistance, and establishment of infection. Required for growth on media where sorbitol or mannitol is the sole carbon source. With sakA, plays a redundant or cooperative role in the conidial stress resistance. Also plays a supportive role in osmotic stress adaptation when sakA is deficient. Involved in paradoxical growth, the cell wall integrity (CWI) pathway and biofilm formation. Acts by modulating sakA activity upon exposure to several types o stresses and during cell wall biosynthesis. Also collaborates with sakA to allow ful virulence in a neutropenic murine model of invasive pulmonary aspergillosis. MpkC and sakA have both independent and collaborative functions during the transcriptional response to transient osmotic stress, and mpkC plays a major role in the modulation of the response to DNA metabolism while activating mitochondrial functions and cation transport. The chain is Mitogen-activated protein kinase mpkC (mpkC) from Aspergillus fumigatus (strain ATCC MYA-4609 / CBS 101355 / FGSC A1100 / Af293) (Neosartorya fumigata).